Reading from the N-terminus, the 154-residue chain is Cytochrome c' (154 aa).

Residues 1 to 23 form the signal peptide; sequence MKHVLASTAAGLMALGLASSAIA. Heme c is bound by residues arginine 35, glutamine 36, arginine 95, cysteine 144, cysteine 147, and histidine 148.

As to quaternary structure, homodimer. Binds 1 heme c group covalently per subunit.

Cytochrome c' is the most widely occurring bacterial c-type cytochrome. Cytochromes c' are high-spin proteins and the heme has no sixth ligand. Their exact function is not known. This Allochromatium vinosum (strain ATCC 17899 / DSM 180 / NBRC 103801 / NCIMB 10441 / D) (Chromatium vinosum) protein is Cytochrome c' (cycA).